The sequence spans 64 residues: Putative isoleucine--tRNA ligase (64 aa).

Belongs to the class-I aminoacyl-tRNA synthetase family. As to quaternary structure, member of a complex that includes annexin.

It catalyses the reaction tRNA(Ile) + L-isoleucine + ATP = L-isoleucyl-tRNA(Ile) + AMP + diphosphate. The sequence is that of Putative isoleucine--tRNA ligase from Physarum polycephalum (Slime mold).